Here is a 98-residue protein sequence, read N- to C-terminus: MSLVYMNIMTAFMVSLAGLLMYRSHLMSSLLCLEGMMLSLFVLATLTILNSHFTLASMMPIILLVFGACEAALGLSLLVMVSNTYGTDYVQNLNLLQC.

The next 3 membrane-spanning stretches (helical) occupy residues 1–21 (MSLV…GLLM), 29–49 (SLLC…LTIL), and 61–81 (IILL…LVMV).

The protein belongs to the complex I subunit 4L family. Core subunit of respiratory chain NADH dehydrogenase (Complex I) which is composed of 45 different subunits.

The protein localises to the mitochondrion inner membrane. It carries out the reaction a ubiquinone + NADH + 5 H(+)(in) = a ubiquinol + NAD(+) + 4 H(+)(out). In terms of biological role, core subunit of the mitochondrial membrane respiratory chain NADH dehydrogenase (Complex I) which catalyzes electron transfer from NADH through the respiratory chain, using ubiquinone as an electron acceptor. Part of the enzyme membrane arm which is embedded in the lipid bilayer and involved in proton translocation. The chain is NADH-ubiquinone oxidoreductase chain 4L (MT-ND4L) from Muntiacus vuquangensis (Giant muntjac).